An 86-amino-acid chain; its full sequence is Large ribosomal subunit protein bL28 (86 aa).

This sequence belongs to the bacterial ribosomal protein bL28 family.

The protein is Large ribosomal subunit protein bL28 of Bacteroides thetaiotaomicron (strain ATCC 29148 / DSM 2079 / JCM 5827 / CCUG 10774 / NCTC 10582 / VPI-5482 / E50).